The primary structure comprises 205 residues: Small ribosomal subunit protein uS4c (205 aa).

A disordered region spans residues 16-40; it reads GKLPSLTNKTSKKRKSPGQPATSFK. One can recognise an S4 RNA-binding domain in the interval 93–161; it reads MRLDNIVHRI…IQKNIESKEL (69 aa).

It belongs to the universal ribosomal protein uS4 family. As to quaternary structure, part of the 30S ribosomal subunit. Contacts protein S5. The interaction surface between S4 and S5 is involved in control of translational fidelity.

The protein localises to the plastid. It is found in the chloroplast. One of the primary rRNA binding proteins, it binds directly to 16S rRNA where it nucleates assembly of the body of the 30S subunit. In terms of biological role, with S5 and S12 plays an important role in translational accuracy. The sequence is that of Small ribosomal subunit protein uS4c (rps4) from Euglena gracilis.